The primary structure comprises 127 residues: Small ribosomal subunit protein uS12 (127 aa).

Positions 1–28 are disordered; that stretch reads MPTIQQLIRDERSKAKRKTKSPALKQCP. 3-methylthioaspartic acid is present on aspartate 89. The segment at 104–127 is disordered; the sequence is ATGVKNRQKARSKYGTKRPKPAAK. Residues 109 to 127 show a composition bias toward basic residues; that stretch reads NRQKARSKYGTKRPKPAAK.

This sequence belongs to the universal ribosomal protein uS12 family. Part of the 30S ribosomal subunit. Contacts proteins S8 and S17. May interact with IF1 in the 30S initiation complex.

Functionally, with S4 and S5 plays an important role in translational accuracy. Interacts with and stabilizes bases of the 16S rRNA that are involved in tRNA selection in the A site and with the mRNA backbone. Located at the interface of the 30S and 50S subunits, it traverses the body of the 30S subunit contacting proteins on the other side and probably holding the rRNA structure together. The combined cluster of proteins S8, S12 and S17 appears to hold together the shoulder and platform of the 30S subunit. In Microcystis aeruginosa (strain NIES-843 / IAM M-2473), this protein is Small ribosomal subunit protein uS12.